Reading from the N-terminus, the 242-residue chain is DNA repair protein RecO (242 aa).

The protein belongs to the RecO family. Monomer.

Functionally, involved in DNA repair and RecF pathway recombination. The chain is DNA repair protein RecO from Shigella sonnei (strain Ss046).